The chain runs to 120 residues: UPF0102 protein TWT_455 (120 aa).

Belongs to the UPF0102 family.

In Tropheryma whipplei (strain Twist) (Whipple's bacillus), this protein is UPF0102 protein TWT_455.